The primary structure comprises 141 residues: HTH-type transcriptional regulator ZntR (141 aa).

The region spanning 1 to 70 is the HTH merR-type domain; it reads MYRIGELAKM…LESIRELLSI (70 aa). The H-T-H motif DNA-binding region spans 4 to 23; the sequence is IGELAKMAEVTPDTIRYYEK. The Zn(2+) site is built by C114, C115, H119, and C124.

Homodimer.

Functionally, zinc-responsive transcriptional regulator of zntA. This is HTH-type transcriptional regulator ZntR (zntR) from Escherichia coli O157:H7.